The following is a 579-amino-acid chain: MSAAIAALAASYGSGSGSESDSDSESSRCPLPAADSLMHLTKSPSSKPSLAVAVDSAPEVAVKEDLETGVHLDPAVKEVQYNPTYETMFAPEFGPENPFRTQQMAAPRNMLSGYAEPAHINDFMFEQQRRTFATYGYALDPSLDNHQVSAKYIGSVEEAEKNQGLTVFETGQKKTEKRKKFKENDASNIDGFLGPWAKYVDEKDVAKPSEEEQKELDEITAKRQKKGKQEEEKPGEEKTILHVKEMYDYQGRSYLHIPQDVGVNLRSTMPPEKCYLPKKQIHVWSGHTKGVSAVRLFPLSGHLLLSCSMDCKIKLWEVYGERRCLRTFIGHSKAVRDICFNTAGTQFLSAAYDRYLKLWDTETGQCISRFTNRKVPYCVKFNPDEDKQNLFVAGMSDKKIVQWDIRSGEIVQEYDRHLGAVNTIVFVDENRRFVSTSDDKSLRVWEWDIPVDFKYIAEPSMHSMPAVTLSPNGKWLACQSMDNQILIFGAQNRFRLNKKKIFKGHMVAGYACQVDFSPDMSYVISGDGNGKLNIWDWKTTKLYSRFKAHDKVCIGAVWHPHETSKVITCGWDGLIKLWD.

Low complexity predominate over residues 1–19 (MSAAIAALAASYGSGSGSE). Disordered stretches follow at residues 1–47 (MSAA…PSSK) and 204–237 (DVAK…PGEE). Phosphoserine is present on S46. 7 WD repeats span residues 286 to 326 (GHTK…RCLR), 330 to 369 (GHSK…CISR), 371 to 413 (TNRK…IVQE), 416 to 455 (RHLG…DFKY), 459 to 498 (PSMH…RLNK), 504 to 545 (GHMV…LYSR), and 548 to 578 (AHDK…IKLW).

As to quaternary structure, component of the pre-catalytic and catalytic spliceosome complexes. Component of the postcatalytic spliceosome P complex. Interacts with PPIL1; this interaction leads to CDC40 isomerization. Undergoes isomerization of the peptide bond between Gly-94 and Pro-95. The reaction is catalyzed by PPIL1.

It is found in the nucleus. The protein localises to the nucleus speckle. Required for pre-mRNA splicing as component of the activated spliceosome. Plays an important role in embryonic brain development; this function does not require proline isomerization. In Homo sapiens (Human), this protein is Pre-mRNA-processing factor 17 (CDC40).